A 320-amino-acid polypeptide reads, in one-letter code: Aminoacyl tRNA synthase complex-interacting multifunctional protein 2 (320 aa).

Residues 82–162 (TPDADLDVTN…HTHSSVKSVP (81 aa)) form an interaction with PRKN region. The interval 162–225 (PENLLKCFGE…FLFSLFGQKH (64 aa)) is interaction with TP53. Residues 220–317 (LFGQKHNAVN…NLAPFNTALK (98 aa)) enclose the GST C-terminal domain.

Part of the multisynthetase complex (MSC), a multisubunit complex that groups tRNA ligases for Arg (RARS1), Asp (DARS1), Gln (QARS1), Ile (IARS1), Leu (LARS1), Lys (KARS1), Met (MARS1) the bifunctional ligase for Glu and Pro (EPRS1) and the auxiliary subunits AIMP1/p43, AIMP2/p38 and EEF1E1/p18. Interacts (via N-terminus) with KARS1. Interacts with EPRS1. Forms a linear complex that contains MARS1, EEF1E1, EPRS1 and AIMP2 that is at the core of the multisubunit complex. Binds FUBP1 (via C-terminus). Interacts in both its unphosphorylated and phosphorylated forms with p53/TP53 (via N-terminus) in the nucleus following UV irradiation. Interacts (via N-terminus) with PRKN/parkin (via first RING-type domain). Interacts with TARS3. Post-translationally, phosphorylated on serine residues in response to UV irradiation. Ubiquitinated by PRKN, leading to its degradation by the proteasome. Mutant PRKN fails to ubiquitinate AIMP2 efficiently, allowing its accumulation which may contribute to neurodegeneration associated with Parkinson disease.

It is found in the cytoplasm. The protein resides in the cytosol. It localises to the nucleus. Functionally, required for assembly and stability of the aminoacyl-tRNA synthase complex. Mediates ubiquitination and degradation of FUBP1, a transcriptional activator of MYC, leading to MYC down-regulation which is required for aveolar type II cell differentiation. Blocks MDM2-mediated ubiquitination and degradation of p53/TP53. Functions as a proapoptotic factor. The protein is Aminoacyl tRNA synthase complex-interacting multifunctional protein 2 (AIMP2) of Homo sapiens (Human).